Here is a 434-residue protein sequence, read N- to C-terminus: 3-phosphoshikimate 1-carboxyvinyltransferase (434 aa).

Lys-22, Ser-23, and Arg-27 together coordinate 3-phosphoshikimate. Lys-22 is a phosphoenolpyruvate binding site. Phosphoenolpyruvate is bound by residues Gly-93 and Arg-121. 3-phosphoshikimate-binding residues include Ser-168, Ser-169, Gln-170, Ser-199, Asp-320, and Lys-347. Gln-170 is a phosphoenolpyruvate binding site. Catalysis depends on Asp-320, which acts as the Proton acceptor. Positions 351, 394, and 419 each coordinate phosphoenolpyruvate.

The protein belongs to the EPSP synthase family. As to quaternary structure, monomer.

It localises to the cytoplasm. The enzyme catalyses 3-phosphoshikimate + phosphoenolpyruvate = 5-O-(1-carboxyvinyl)-3-phosphoshikimate + phosphate. Its pathway is metabolic intermediate biosynthesis; chorismate biosynthesis; chorismate from D-erythrose 4-phosphate and phosphoenolpyruvate: step 6/7. Catalyzes the transfer of the enolpyruvyl moiety of phosphoenolpyruvate (PEP) to the 5-hydroxyl of shikimate-3-phosphate (S3P) to produce enolpyruvyl shikimate-3-phosphate and inorganic phosphate. The polypeptide is 3-phosphoshikimate 1-carboxyvinyltransferase (Paraburkholderia phymatum (strain DSM 17167 / CIP 108236 / LMG 21445 / STM815) (Burkholderia phymatum)).